A 531-amino-acid chain; its full sequence is RNA-binding protein RO60 (531 aa).

The TROVE domain maps to valine 24–threonine 360. An RNA-binding region spans residues arginine 128–asparagine 274. The segment at phenylalanine 352–valine 531 is VWFA-like domain. Residues serine 369, serine 371, and threonine 438 each contribute to the a divalent metal cation site.

It belongs to the Ro 60 kDa family. In terms of assembly, forms oligomers upon binding DrY RNA, The multimers are of an average size of 700 kDa and are composed of around 12 molecules of Rsr-DrY RNA.

The protein resides in the cytoplasm. Binds to several small RNAs that accumulate during recovery from UV irradiation. Contributes to the resistance of D.radiodurans to ultraviolet irradiation. The polypeptide is RNA-binding protein RO60 (Deinococcus radiodurans (strain ATCC 13939 / DSM 20539 / JCM 16871 / CCUG 27074 / LMG 4051 / NBRC 15346 / NCIMB 9279 / VKM B-1422 / R1)).